The following is a 139-amino-acid chain: Small ribosomal subunit protein uS19 (139 aa).

This sequence belongs to the universal ribosomal protein uS19 family.

In terms of biological role, protein S19 forms a complex with S13 that binds strongly to the 16S ribosomal RNA. This is Small ribosomal subunit protein uS19 from Methanoregula boonei (strain DSM 21154 / JCM 14090 / 6A8).